Reading from the N-terminus, the 207-residue chain is MLNKLSLLLKDAGIPLTDHQKNQLIAYVNMLHKWNKAYNLTSVRDPNEMLVRHILDSIVVAPYLQGERFIDVGTGPGLPGIPLSIVRPEAHFTLLDSLGKRVRFLRQVQHELKLENIEPVQSRVEEFPSEPPFDGVISRAFASLNDMVSWCHHLPGEQGRFYALKGQMPEDEIALLHEEYQVESVVKLQVPALDGERHLVVIKANKI.

Residues Gly73, Leu78, 124-125, and Arg139 contribute to the S-adenosyl-L-methionine site; that span reads VE.

It belongs to the methyltransferase superfamily. RNA methyltransferase RsmG family.

Its subcellular location is the cytoplasm. It carries out the reaction guanosine(527) in 16S rRNA + S-adenosyl-L-methionine = N(7)-methylguanosine(527) in 16S rRNA + S-adenosyl-L-homocysteine. Specifically methylates the N7 position of guanine in position 527 of 16S rRNA. This is Ribosomal RNA small subunit methyltransferase G from Shigella dysenteriae serotype 1 (strain Sd197).